Reading from the N-terminus, the 625-residue chain is tRNA (uracil-5-)-methyltransferase homolog A (625 aa).

Disordered regions lie at residues 1 to 37 (MSEN…AAPA) and 145 to 165 (RPKA…EPPV). Residues 27-37 (PTVSVPPAAPA) are compositionally biased toward low complexity. The 74-residue stretch at 73-146 (FKLELQNVPR…RPLSVRLARP (74 aa)) folds into the RRM domain. Residues 180 to 209 (YAEQLERKQLECEQVLQKLAKEIGSTNRAL) are a coiled coil. Ser378 carries the post-translational modification Phosphoserine. S-adenosyl-L-methionine is bound by residues Gln411, Glu461, and Asp510. Cys538 serves as the catalytic Nucleophile. The active-site Proton acceptor is the Glu581. A disordered region spans residues 594–625 (GTGVLGPHSPPAQPTPGPPDNTLQETGTFPSS). Over residues 601–612 (HSPPAQPTPGPP) the composition is skewed to pro residues. The residue at position 602 (Ser602) is a Phosphoserine. A compositionally biased stretch (polar residues) spans 614–625 (NTLQETGTFPSS).

The protein belongs to the class I-like SAM-binding methyltransferase superfamily. RNA M5U methyltransferase family.

Its subcellular location is the cytoplasm. It localises to the cytosol. It catalyses the reaction uridine(54) in tRNA + S-adenosyl-L-methionine = 5-methyluridine(54) in tRNA + S-adenosyl-L-homocysteine + H(+). The enzyme catalyses a uridine in mRNA + S-adenosyl-L-methionine = a 5-methyluridine in mRNA + S-adenosyl-L-homocysteine + H(+). S-adenosyl-L-methionine-dependent methyltransferase that catalyzes the formation of 5-methyl-uridine in tRNAs and some mRNAs. Mainly catalyzes the methylation of uridine at position 54 (m5U54) in cytosolic tRNAs. Also able to mediate the formation of 5-methyl-uridine in some mRNAs. This Homo sapiens (Human) protein is tRNA (uracil-5-)-methyltransferase homolog A.